A 104-amino-acid chain; its full sequence is Iron-sulfur cluster assembly protein CyaY (104 aa).

Belongs to the frataxin family.

In terms of biological role, involved in iron-sulfur (Fe-S) cluster assembly. May act as a regulator of Fe-S biogenesis. In Vibrio atlanticus (strain LGP32) (Vibrio splendidus (strain Mel32)), this protein is Iron-sulfur cluster assembly protein CyaY.